A 777-amino-acid chain; its full sequence is Biotin sulfoxide reductase (777 aa).

Ser-148 is a binding site for Mo-bis(molybdopterin guanine dinucleotide).

It belongs to the prokaryotic molybdopterin-containing oxidoreductase family. It depends on Mo-bis(molybdopterin guanine dinucleotide) as a cofactor.

The catalysed reaction is [thioredoxin]-disulfide + L-methionine + H2O = L-methionine (S)-S-oxide + [thioredoxin]-dithiol. Functionally, this enzyme may serve as a scavenger, allowing the cell to utilize biotin sulfoxide as a biotin source. It reduces a spontaneous oxidation product of biotin, D-biotin D-sulfoxide (BSO or BDS), back to biotin. Also exhibits methionine-(S)-sulfoxide (Met-S-SO) reductase activity, acting specifically on the (S) enantiomer in the free, but not the protein-bound form. It thus plays a role in assimilation of oxidized methionines. The sequence is that of Biotin sulfoxide reductase (bisC) from Escherichia coli (strain K12).